The chain runs to 392 residues: Integrin-linked kinase-associated serine/threonine phosphatase 2C (392 aa).

M1 carries the N-acetylmethionine modification. A disordered region spans residues 1-91; that stretch reads MDLFGDLPEP…PEEEKNGGEE (91 aa). Positions 56–70 are enriched in polar residues; sequence SGNSGSLATSGSQVV. Positions 72-91 are enriched in basic and acidic residues; sequence TEGKGAKRKAPEEEKNGGEE. Residues 108 to 390 form the PPM-type phosphatase domain; it reads KGYVAERKGE…DNVTVMVVRI (283 aa). The Mn(2+) site is built by D152 and G153. K210 is subject to N6-acetyllysine. D326 and D381 together coordinate Mn(2+).

Belongs to the PP2C family. As to quaternary structure, interacts with ILK. Requires Mg(2+) as cofactor. The cofactor is Mn(2+).

The protein localises to the cytoplasm. The enzyme catalyses O-phospho-L-seryl-[protein] + H2O = L-seryl-[protein] + phosphate. It carries out the reaction O-phospho-L-threonyl-[protein] + H2O = L-threonyl-[protein] + phosphate. Its function is as follows. Protein phosphatase that may play a role in regulation of cell cycle progression via dephosphorylation of its substrates whose appropriate phosphorylation states might be crucial for cell proliferation. Selectively associates with integrin linked kinase (ILK), to modulate cell adhesion and growth factor signaling. Inhibits the ILK-GSK3B signaling axis and may play an important role in inhibiting oncogenic transformation. This is Integrin-linked kinase-associated serine/threonine phosphatase 2C (Ilkap) from Mus musculus (Mouse).